A 405-amino-acid polypeptide reads, in one-letter code: L-carnitine CoA-transferase (405 aa).

CoA is bound by residues lysine 97 and arginine 104. Aspartate 169 functions as the Nucleophile in the catalytic mechanism.

This sequence belongs to the CoA-transferase III family. CaiB subfamily. In terms of assembly, homodimer.

The protein localises to the cytoplasm. The catalysed reaction is crotonobetainyl-CoA + (R)-carnitine = crotonobetaine + (R)-carnitinyl-CoA. It catalyses the reaction 4-(trimethylamino)butanoyl-CoA + (R)-carnitine = (R)-carnitinyl-CoA + 4-(trimethylamino)butanoate. Its pathway is amine and polyamine metabolism; carnitine metabolism. Its function is as follows. Catalyzes the reversible transfer of the CoA moiety from gamma-butyrobetainyl-CoA to L-carnitine to generate L-carnitinyl-CoA and gamma-butyrobetaine. Is also able to catalyze the reversible transfer of the CoA moiety from gamma-butyrobetainyl-CoA or L-carnitinyl-CoA to crotonobetaine to generate crotonobetainyl-CoA. This Salmonella choleraesuis (strain SC-B67) protein is L-carnitine CoA-transferase.